A 451-amino-acid polypeptide reads, in one-letter code: UDP-glucosyltransferase 74AE2 (451 aa).

His-17 serves as the catalytic Proton acceptor. Residue His-17 coordinates an anthocyanidin. The Charge relay role is filled by Asp-108. Thr-130, Gln-330, His-345, Trp-348, Asn-349, Ser-350, Glu-353, Asp-369, and Gln-370 together coordinate UDP-alpha-D-glucose.

It belongs to the UDP-glycosyltransferase family. As to expression, expressed at higher levels in roots than in leaves.

The catalysed reaction is (20S)-ginsenoside C-K + UDP-alpha-D-glucose = (20S)-ginsenoside F2 + UDP + H(+). The enzyme catalyses (20S)-protopanaxadiol + UDP-alpha-D-glucose = (20S)-ginsenoside Rh2 + UDP + H(+). It functions in the pathway secondary metabolite biosynthesis; terpenoid biosynthesis. Functionally, component of the dammarane-type triterpene saponins (e.g. PPD-type ginsenosides or panaxosides) biosynthetic pathway. Glycosyltransferase that catalyzes the biosynthesis of ginsenoside Rh2 from protopanaxadiol (PPD) and the conversion of compound K to ginsenoside F2. The chain is UDP-glucosyltransferase 74AE2 from Panax ginseng (Korean ginseng).